Consider the following 257-residue polypeptide: TLC domain-containing protein 3A (257 aa).

7 helical membrane-spanning segments follow: residues 1 to 21, 42 to 62, 71 to 91, 114 to 134, 142 to 162, 181 to 201, and 220 to 240; these read MLLT…LSIW, LVSS…IISC, WLAT…FYAM, LIEN…LVPI, LGDF…FVSL, GILT…FMYW, and LHCN…FSLL. Residues 33–249 form the TLC domain; the sequence is DDCLTVGTRL…LCKKAARLFD (217 aa).

Interacts with GGT7 isoform 3 and SLC3A2.

The protein resides in the cell membrane. The polypeptide is TLC domain-containing protein 3A (Tlcd3a) (Mus musculus (Mouse)).